Here is a 277-residue protein sequence, read N- to C-terminus: Shikimate dehydrogenase (NADP(+)) (277 aa).

Shikimate is bound by residues 15–17 (SLS) and Thr-62. The active-site Proton acceptor is the Lys-66. Residues Asn-87 and Asp-102 each contribute to the shikimate site. Residues 127–131 (GAGGA), 151–156 (NRTVDK), and Ile-219 contribute to the NADP(+) site. Shikimate is bound at residue Tyr-221. Gly-242 lines the NADP(+) pocket.

The protein belongs to the shikimate dehydrogenase family. In terms of assembly, homodimer.

It catalyses the reaction shikimate + NADP(+) = 3-dehydroshikimate + NADPH + H(+). The protein operates within metabolic intermediate biosynthesis; chorismate biosynthesis; chorismate from D-erythrose 4-phosphate and phosphoenolpyruvate: step 4/7. Involved in the biosynthesis of the chorismate, which leads to the biosynthesis of aromatic amino acids. Catalyzes the reversible NADPH linked reduction of 3-dehydroshikimate (DHSA) to yield shikimate (SA). This chain is Shikimate dehydrogenase (NADP(+)), found in Bacillus cereus (strain ZK / E33L).